Here is a 348-residue protein sequence, read N- to C-terminus: Protein RecA (348 aa).

66–73 (GPESSGKT) contributes to the ATP binding site.

It belongs to the RecA family.

Its subcellular location is the cytoplasm. Can catalyze the hydrolysis of ATP in the presence of single-stranded DNA, the ATP-dependent uptake of single-stranded DNA by duplex DNA, and the ATP-dependent hybridization of homologous single-stranded DNAs. It interacts with LexA causing its activation and leading to its autocatalytic cleavage. This Neisseria meningitidis serogroup C / serotype 2a (strain ATCC 700532 / DSM 15464 / FAM18) protein is Protein RecA.